The primary structure comprises 106 residues: Large ribosomal subunit protein uL24 (106 aa).

Belongs to the universal ribosomal protein uL24 family. As to quaternary structure, part of the 50S ribosomal subunit.

One of two assembly initiator proteins, it binds directly to the 5'-end of the 23S rRNA, where it nucleates assembly of the 50S subunit. In terms of biological role, one of the proteins that surrounds the polypeptide exit tunnel on the outside of the subunit. In Erythrobacter litoralis (strain HTCC2594), this protein is Large ribosomal subunit protein uL24.